A 340-amino-acid polypeptide reads, in one-letter code: UPF0324 membrane protein BA_5405/GBAA_5405/BAS5024 (340 aa).

The next 10 helical transmembrane spans lie at 13 to 35 (FGFS…LAEL), 40 to 59 (IMGQ…AAIG), 99 to 118 (VLVI…YGLT), 128 to 150 (GILT…APQV), 157 to 179 (TAVG…TLLY), 189 to 211 (YGVF…APGG), 218 to 240 (AVIV…GVWF), 255 to 277 (LPIP…GIIP), 279 to 301 (VVAG…GLGL), and 316 to 338 (FVAG…YALG).

The protein belongs to the UPF0324 family.

The protein localises to the cell membrane. The protein is UPF0324 membrane protein BA_5405/GBAA_5405/BAS5024 of Bacillus anthracis.